The sequence spans 510 residues: GTPase Der (510 aa).

EngA-type G domains lie at 3 to 167 (LKLA…GPEA) and 230 to 405 (IRLA…KDWT). GTP-binding positions include 9 to 16 (GRPNVGKS), 56 to 60 (DTAGF), 119 to 122 (NKAE), 236 to 243 (GRPNAGKS), 283 to 287 (DTAGL), and 348 to 351 (SKWD). In terms of domain architecture, KH-like spans 406–490 (ARAKTGDLNR…PIRLFVRQGK (85 aa)).

It belongs to the TRAFAC class TrmE-Era-EngA-EngB-Septin-like GTPase superfamily. EngA (Der) GTPase family. As to quaternary structure, associates with the 50S ribosomal subunit.

Functionally, GTPase that plays an essential role in the late steps of ribosome biogenesis. The chain is GTPase Der from Hyphomonas neptunium (strain ATCC 15444).